Reading from the N-terminus, the 581-residue chain is Arginine--tRNA ligase (581 aa).

The short motif at Pro-126–His-136 is the 'HIGH' region element.

This sequence belongs to the class-I aminoacyl-tRNA synthetase family. As to quaternary structure, monomer.

The protein localises to the cytoplasm. It carries out the reaction tRNA(Arg) + L-arginine + ATP = L-arginyl-tRNA(Arg) + AMP + diphosphate. This is Arginine--tRNA ligase from Shewanella sp. (strain MR-4).